The chain runs to 457 residues: Nucleoprotein (457 aa).

Positions 1-62 (MSFVPGQENA…ATTQPNSGSV (62 aa)) are disordered. The span at 9–23 (NAGSRSSSGNRAGNG) shows a compositional bias: low complexity. The span at 49-61 (PKQTATTQPNSGS) shows a compositional bias: polar residues. Positions 56–197 (QPNSGSVVPH…GYYVEGSGRS (142 aa)) are RNA-binding. The region spanning 64-193 (PHYSWFSGIT…FLPQGYYVEG (130 aa)) is the CoV N NTD domain. Residues arginine 109, arginine 125, and arginine 167 each coordinate RNA. Disordered regions lie at residues 158–178 (TRTS…IPTR), 190–228 (YVEG…PASI), 249–290 (AGQP…FGKR), and 382–429 (QDGG…VNRE). Phosphoserine; by host is present on serine 170. Residue threonine 177 is modified to Phosphothreonine; by host. The segment covering 193–212 (GSGRSAPASRSGSRSQSRGP) has biased composition (low complexity). Serine 194 carries the post-translational modification Phosphoserine; by host. Positions 215–225 (RARSSSNQRQP) are enriched in polar residues. A CoV N CTD domain is found at 260 to 383 (AKEVRQKILN…ENLNAYQNQD (124 aa)). The span at 267 to 277 (ILNKPRQKRTP) shows a compositional bias: basic residues. Residues 267 to 384 (ILNKPRQKRT…NLNAYQNQDG (118 aa)) form a dimerization region. Serine 390 carries the post-translational modification Phosphoserine; by host. Position 431 is a phosphothreonine; by host (threonine 431).

The protein belongs to the betacoronavirus nucleocapsid protein family. Homooligomer. Both monomeric and oligomeric forms interact with RNA. Interacts with protein M. Interacts with NSP3; this interaction serves to tether the genome to the newly translated replicase-transcriptase complex at a very early stage of infection. In terms of processing, ADP-ribosylated. The ADP-ribosylation is retained in the virion during infection. Phosphorylated on serine and threonine residues.

It localises to the virion. The protein resides in the host endoplasmic reticulum-Golgi intermediate compartment. It is found in the host Golgi apparatus. In terms of biological role, packages the positive strand viral genome RNA into a helical ribonucleocapsid (RNP) and plays a fundamental role during virion assembly through its interactions with the viral genome and membrane protein M. Plays an important role in enhancing the efficiency of subgenomic viral RNA transcription as well as viral replication. This Puffinus puffinus (Manx shearwater) protein is Nucleoprotein.